The following is a 376-amino-acid chain: uncharacterized protein (376 aa).

The protein belongs to the NAD(P)-dependent epimerase/dehydratase family.

This is an uncharacterized protein from Mycobacterium bovis (strain ATCC BAA-935 / AF2122/97).